A 255-amino-acid polypeptide reads, in one-letter code: Na(+)-translocating NADH-quinone reductase subunit C (255 aa).

A helical membrane pass occupies residues 12 to 32 (LFVVIALSLVCSIIVSTAAVG). Threonine 223 bears the FMN phosphoryl threonine mark.

The protein belongs to the NqrC family. As to quaternary structure, composed of six subunits; NqrA, NqrB, NqrC, NqrD, NqrE and NqrF. FMN serves as cofactor.

Its subcellular location is the cell inner membrane. It carries out the reaction a ubiquinone + n Na(+)(in) + NADH + H(+) = a ubiquinol + n Na(+)(out) + NAD(+). In terms of biological role, NQR complex catalyzes the reduction of ubiquinone-1 to ubiquinol by two successive reactions, coupled with the transport of Na(+) ions from the cytoplasm to the periplasm. NqrA to NqrE are probably involved in the second step, the conversion of ubisemiquinone to ubiquinol. This is Na(+)-translocating NADH-quinone reductase subunit C from Vibrio anguillarum (Listonella anguillarum).